Here is a 118-residue protein sequence, read N- to C-terminus: Ribonuclease P protein component (118 aa).

The protein belongs to the RnpA family. In terms of assembly, consists of a catalytic RNA component (M1 or rnpB) and a protein subunit.

The enzyme catalyses Endonucleolytic cleavage of RNA, removing 5'-extranucleotides from tRNA precursor.. RNaseP catalyzes the removal of the 5'-leader sequence from pre-tRNA to produce the mature 5'-terminus. It can also cleave other RNA substrates such as 4.5S RNA. The protein component plays an auxiliary but essential role in vivo by binding to the 5'-leader sequence and broadening the substrate specificity of the ribozyme. In Petrotoga mobilis (strain DSM 10674 / SJ95), this protein is Ribonuclease P protein component.